The following is a 346-amino-acid chain: Phosphate acyltransferase (346 aa).

This sequence belongs to the PlsX family. Homodimer. Probably interacts with PlsY.

It is found in the cytoplasm. The catalysed reaction is a fatty acyl-[ACP] + phosphate = an acyl phosphate + holo-[ACP]. It functions in the pathway lipid metabolism; phospholipid metabolism. Catalyzes the reversible formation of acyl-phosphate (acyl-PO(4)) from acyl-[acyl-carrier-protein] (acyl-ACP). This enzyme utilizes acyl-ACP as fatty acyl donor, but not acyl-CoA. The protein is Phosphate acyltransferase of Brucella melitensis biotype 2 (strain ATCC 23457).